Consider the following 533-residue polypeptide: Peptide chain release factor 3 (533 aa).

The region spanning 9–284 (ARRRTFAIIS…ALCELSPPPL (276 aa)) is the tr-type G domain. GTP contacts are provided by residues 18 to 25 (SHPDAGKT), 95 to 99 (DTPGH), and 149 to 152 (NKLD).

It belongs to the TRAFAC class translation factor GTPase superfamily. Classic translation factor GTPase family. PrfC subfamily.

It localises to the cytoplasm. In terms of biological role, increases the formation of ribosomal termination complexes and stimulates activities of RF-1 and RF-2. It binds guanine nucleotides and has strong preference for UGA stop codons. It may interact directly with the ribosome. The stimulation of RF-1 and RF-2 is significantly reduced by GTP and GDP, but not by GMP. The chain is Peptide chain release factor 3 from Cupriavidus taiwanensis (strain DSM 17343 / BCRC 17206 / CCUG 44338 / CIP 107171 / LMG 19424 / R1) (Ralstonia taiwanensis (strain LMG 19424)).